A 33-amino-acid chain; its full sequence is Putative tumor antigen NA88-A (33 aa).

As to expression, expressed in testis and melanoma cell lines.

The chain is Putative tumor antigen NA88-A (VENTXP1) from Homo sapiens (Human).